The following is a 540-amino-acid chain: RNA exonuclease 3 (540 aa).

The segment at 7–34 adopts a C3H1-type zinc-finger fold; that stretch reads QFKHIVCPFLRTGRKCQSRNCFFSHDFQ. Positions 382-529 constitute an Exonuclease domain; that stretch reads HCALDCELCY…EDAVSALQLV (148 aa).

The protein belongs to the REXO1/REXO3 family.

It is found in the cytoplasm. Its subcellular location is the nucleus. Functionally, 3' to 5' exoribonuclease required for proper 3' end maturation of MRP RNA and of the U5L snRNA. The sequence is that of RNA exonuclease 3 (rex3) from Schizosaccharomyces pombe (strain 972 / ATCC 24843) (Fission yeast).